Here is a 315-residue protein sequence, read N- to C-terminus: Biotin synthase (315 aa).

Residues 39-266 (NSLQFATLLS…KSAIRLTAGR (228 aa)) enclose the Radical SAM core domain. Cysteine 54, cysteine 58, and cysteine 61 together coordinate [4Fe-4S] cluster. [2Fe-2S] cluster is bound by residues cysteine 98, cysteine 129, cysteine 189, and arginine 261.

It belongs to the radical SAM superfamily. Biotin synthase family. Homodimer. It depends on [4Fe-4S] cluster as a cofactor. The cofactor is [2Fe-2S] cluster.

The enzyme catalyses (4R,5S)-dethiobiotin + (sulfur carrier)-SH + 2 reduced [2Fe-2S]-[ferredoxin] + 2 S-adenosyl-L-methionine = (sulfur carrier)-H + biotin + 2 5'-deoxyadenosine + 2 L-methionine + 2 oxidized [2Fe-2S]-[ferredoxin]. It functions in the pathway cofactor biosynthesis; biotin biosynthesis; biotin from 7,8-diaminononanoate: step 2/2. Its function is as follows. Catalyzes the conversion of dethiobiotin (DTB) to biotin by the insertion of a sulfur atom into dethiobiotin via a radical-based mechanism. This is Biotin synthase from Legionella pneumophila (strain Paris).